A 276-amino-acid chain; its full sequence is NH(3)-dependent NAD(+) synthetase (276 aa).

An ATP-binding site is contributed by 43–50 (GISGGVDS). D49 serves as a coordination point for Mg(2+). R146 is a deamido-NAD(+) binding site. T166 serves as a coordination point for ATP. A Mg(2+)-binding site is contributed by E171. Deamido-NAD(+)-binding residues include K179 and D186. ATP-binding residues include K195 and T217. 266–267 (HK) is a binding site for deamido-NAD(+).

It belongs to the NAD synthetase family. Homodimer.

It catalyses the reaction deamido-NAD(+) + NH4(+) + ATP = AMP + diphosphate + NAD(+) + H(+). It functions in the pathway cofactor biosynthesis; NAD(+) biosynthesis; NAD(+) from deamido-NAD(+) (ammonia route): step 1/1. In terms of biological role, catalyzes the ATP-dependent amidation of deamido-NAD to form NAD. Uses ammonia as a nitrogen source. In Shewanella baltica (strain OS185), this protein is NH(3)-dependent NAD(+) synthetase.